A 137-amino-acid polypeptide reads, in one-letter code: Large ribosomal subunit protein uL16 (137 aa).

This sequence belongs to the universal ribosomal protein uL16 family. In terms of assembly, part of the 50S ribosomal subunit.

Binds 23S rRNA and is also seen to make contacts with the A and possibly P site tRNAs. This is Large ribosomal subunit protein uL16 from Beijerinckia indica subsp. indica (strain ATCC 9039 / DSM 1715 / NCIMB 8712).